Consider the following 398-residue polypeptide: UPF0229 protein Ccel_0490 (398 aa).

Disordered regions lie at residues 1–22 (MAIF…RRRH) and 68–104 (KSKP…NSEG). Composition is skewed to basic and acidic residues over residues 11–22 (GKDRSAEDRRRH) and 78–95 (GNEK…EGKG).

This sequence belongs to the UPF0229 family.

This Ruminiclostridium cellulolyticum (strain ATCC 35319 / DSM 5812 / JCM 6584 / H10) (Clostridium cellulolyticum) protein is UPF0229 protein Ccel_0490.